Reading from the N-terminus, the 230-residue chain is Broad specificity amino-acid racemase YgeA (230 aa).

Residues M10, Q52, and 83 to 85 (TNT) contribute to the substrate site. The active-site Proton donor is T83. The active-site Proton acceptor is the C197. 198-199 (TE) contacts substrate.

Belongs to the aspartate/glutamate racemases family.

It carries out the reaction an L-alpha-amino acid = a D-alpha-amino acid. The catalysed reaction is L-homoserine = D-homoserine. Functionally, amino-acid racemase able to utilize a broad range of substrates. Highest activity is observed with L-homoserine and D-homoserine. Has tenfold lower activity against L-methionine, L-leucine, L-valine and L-histidine. Has low activity with L-norvaline, L-asparagine, D-methionine, L-aminobutyric acid, L-isoleucine, L-serine, L-norleucine, L-alanine, L-glutamine, LL-diaminopimelic acid and L-phenylalanine. Has no activity against ten L-amino acids (Thr, Glu, Asp, Arg, Lys, Tyr, Trp, Orn, Cit and Aad). D-amino acids might be used as components of peptidoglycan and/or be involved in peptidoglycan metabolism and remodeling. In Escherichia coli (strain K12), this protein is Broad specificity amino-acid racemase YgeA (ygeA).